The chain runs to 340 residues: Glycerol-3-phosphate dehydrogenase [NAD(P)+] (340 aa).

Residues Ser11, Trp12, Arg32, Arg33, and Lys106 each contribute to the NADPH site. Lys106, Gly138, and Ser140 together coordinate sn-glycerol 3-phosphate. Ala142 is a binding site for NADPH. The sn-glycerol 3-phosphate site is built by Lys193, Asp246, Ser256, Arg257, and Asn258. Lys193 (proton acceptor) is an active-site residue. Residue Arg257 coordinates NADPH. Positions 281 and 283 each coordinate NADPH.

Belongs to the NAD-dependent glycerol-3-phosphate dehydrogenase family.

Its subcellular location is the cytoplasm. It carries out the reaction sn-glycerol 3-phosphate + NAD(+) = dihydroxyacetone phosphate + NADH + H(+). The enzyme catalyses sn-glycerol 3-phosphate + NADP(+) = dihydroxyacetone phosphate + NADPH + H(+). The protein operates within membrane lipid metabolism; glycerophospholipid metabolism. In terms of biological role, catalyzes the reduction of the glycolytic intermediate dihydroxyacetone phosphate (DHAP) to sn-glycerol 3-phosphate (G3P), the key precursor for phospholipid synthesis. In Shouchella clausii (strain KSM-K16) (Alkalihalobacillus clausii), this protein is Glycerol-3-phosphate dehydrogenase [NAD(P)+].